The chain runs to 447 residues: Trigger factor (447 aa).

Residues 188–273 (GDKLVIDFEG…VNDIQVAEDF (86 aa)) enclose the PPIase FKBP-type domain.

This sequence belongs to the FKBP-type PPIase family. Tig subfamily.

The protein localises to the cytoplasm. It catalyses the reaction [protein]-peptidylproline (omega=180) = [protein]-peptidylproline (omega=0). Its function is as follows. Involved in protein export. Acts as a chaperone by maintaining the newly synthesized protein in an open conformation. Functions as a peptidyl-prolyl cis-trans isomerase. This chain is Trigger factor, found in Wolbachia sp. subsp. Brugia malayi (strain TRS).